The sequence spans 333 residues: Protein RecA (333 aa).

69–76 (GPESSGKT) contributes to the ATP binding site.

Belongs to the RecA family.

It is found in the cytoplasm. In terms of biological role, can catalyze the hydrolysis of ATP in the presence of single-stranded DNA, the ATP-dependent uptake of single-stranded DNA by duplex DNA, and the ATP-dependent hybridization of homologous single-stranded DNAs. It interacts with LexA causing its activation and leading to its autocatalytic cleavage. In Mesoplasma florum (strain ATCC 33453 / NBRC 100688 / NCTC 11704 / L1) (Acholeplasma florum), this protein is Protein RecA.